A 221-amino-acid polypeptide reads, in one-letter code: Uracil-DNA glycosylase (221 aa).

D64 (proton acceptor) is an active-site residue.

Belongs to the uracil-DNA glycosylase (UDG) superfamily. UNG family.

The protein localises to the cytoplasm. It carries out the reaction Hydrolyzes single-stranded DNA or mismatched double-stranded DNA and polynucleotides, releasing free uracil.. Its function is as follows. Excises uracil residues from the DNA which can arise as a result of misincorporation of dUMP residues by DNA polymerase or due to deamination of cytosine. The chain is Uracil-DNA glycosylase from Mycoplasmopsis pulmonis (strain UAB CTIP) (Mycoplasma pulmonis).